A 506-amino-acid chain; its full sequence is Maturase K (506 aa).

It belongs to the intron maturase 2 family. MatK subfamily.

The protein resides in the plastid. It is found in the chloroplast. Functionally, usually encoded in the trnK tRNA gene intron. Probably assists in splicing its own and other chloroplast group II introns. The sequence is that of Maturase K from Trifolium lupinaster (Lupine clover).